A 644-amino-acid chain; its full sequence is Protein cueball (644 aa).

An N-terminal signal peptide occupies residues 1–26 (MIRIRFGMDVLLVLLLATCLLSPTHG). Topologically, residues 27–531 (TPLEWDFAVT…VCLTPTVWTS (505 aa)) are extracellular. Asn-82 and Asn-108 each carry an N-linked (GlcNAc...) asparagine glycan. LDL-receptor class B repeat units follow at residues 121–166 (TNLF…DVCR), 167–211 (RKLY…DQLS), and 212–257 (DRLF…TNDA). Residues Asn-175 and Asn-190 are each glycosylated (N-linked (GlcNAc...) asparagine). N-linked (GlcNAc...) asparagine glycosylation occurs at Asn-313. 2 consecutive EGF-like domains span residues 398-430 (EIRE…FTGE) and 433-471 (EVSV…ARCE). 5 disulfide bridges follow: Cys-402-Cys-411, Cys-406-Cys-421, Cys-437-Cys-447, Cys-441-Cys-459, and Cys-461-Cys-470. N-linked (GlcNAc...) asparagine glycosylation is found at Asn-473 and Asn-508. Residues 532-552 (SVIIILVVGIVSSLLLVAVIV) form a helical membrane-spanning segment. Over 553-644 (HGIRRLYKPK…LIHNMEDDLY (92 aa)) the chain is Cytoplasmic.

Belongs to the cueball family.

It localises to the cell membrane. Has a role in spermatogenesis and oogenesis. In Drosophila yakuba (Fruit fly), this protein is Protein cueball.